The following is a 391-amino-acid chain: Alanine racemase, biosynthetic (391 aa).

Catalysis depends on Lys-52, which acts as the Proton acceptor; specific for D-alanine. Lys-52 carries the N6-(pyridoxal phosphate)lysine modification. A substrate-binding site is contributed by Arg-149. Residue Tyr-271 is the Proton acceptor; specific for L-alanine of the active site. Position 330 (Met-330) interacts with substrate.

It belongs to the alanine racemase family. It depends on pyridoxal 5'-phosphate as a cofactor.

It carries out the reaction L-alanine = D-alanine. It functions in the pathway amino-acid biosynthesis; D-alanine biosynthesis; D-alanine from L-alanine: step 1/1. The protein operates within cell wall biogenesis; peptidoglycan biosynthesis. In terms of biological role, catalyzes the interconversion of L-alanine and D-alanine. Provides the D-alanine required for cell wall biosynthesis. This is Alanine racemase, biosynthetic (alr) from Agrobacterium fabrum (strain C58 / ATCC 33970) (Agrobacterium tumefaciens (strain C58)).